Reading from the N-terminus, the 837-residue chain is Semaphorin-4G (837 aa).

Positions Met-1 to Ala-17 are cleaved as a signal peptide. At Val-18 to Met-673 the chain is on the extracellular side. The 469-residue stretch at Arg-35 to Leu-503 folds into the Sema domain. Residues Asn-55, Asn-111, and Asn-126 are each glycosylated (N-linked (GlcNAc...) asparagine). A disulfide bridge connects residues Cys-104 and Cys-115. 3 disulfides stabilise this stretch: Cys-133/Cys-142, Cys-268/Cys-375, and Cys-292/Cys-335. Asn-386 is a glycosylation site (N-linked (GlcNAc...) asparagine). The region spanning Ser-505–Glu-556 is the PSI domain. Disulfide bonds link Cys-506-Cys-523 and Cys-515-Cys-532. Residues Asn-540 and Asn-596 are each glycosylated (N-linked (GlcNAc...) asparagine). An Ig-like C2-type domain is found at Pro-565–Thr-647. The cysteines at positions 582 and 630 are disulfide-linked. The helical transmembrane segment at Phe-674–Leu-694 threads the bilayer. Over Tyr-695–Val-837 the chain is Cytoplasmic. A disordered region spans residues Ser-721–Leu-776. Acidic residues predominate over residues Gly-734 to Glu-743. Pro residues predominate over residues Pro-762–Ala-774. Phosphoserine occurs at positions 794 and 836.

This sequence belongs to the semaphorin family. Interacts with PLXNB2. As to expression, brain, spinal cord, and several sensory organs as well as specific populations of projection neurons.

The protein resides in the cell membrane. In terms of biological role, cell surface receptor for PLXNB2. May play a role in axon guidance. This is Semaphorin-4G (Sema4g) from Mus musculus (Mouse).